A 364-amino-acid polypeptide reads, in one-letter code: Peptide chain release factor 1 (364 aa).

Position 237 is an N5-methylglutamine (glutamine 237).

It belongs to the prokaryotic/mitochondrial release factor family. In terms of processing, methylated by PrmC. Methylation increases the termination efficiency of RF1.

The protein localises to the cytoplasm. Functionally, peptide chain release factor 1 directs the termination of translation in response to the peptide chain termination codons UAG and UAA. The polypeptide is Peptide chain release factor 1 (Rubrobacter xylanophilus (strain DSM 9941 / JCM 11954 / NBRC 16129 / PRD-1)).